The primary structure comprises 199 residues: Protein-methionine-sulfoxide reductase heme-binding subunit MsrQ (199 aa).

Helical transmembrane passes span 13 to 33 (VLLHLAGFLPLLWLILSVDQG), 79 to 99 (LLGLWCFFWATLHLVSYALLE), 120 to 140 (LGVISWLILLALAVTSPQIMM), 147 to 167 (WQKLHNFVYLVAILAPIHYLW), and 169 to 189 (VKTLSPQPILYALAALILLLF).

It belongs to the MsrQ family. Heterodimer of a catalytic subunit (MsrP) and a heme-binding subunit (MsrQ). FMN serves as cofactor. It depends on heme b as a cofactor.

Its subcellular location is the cell inner membrane. Part of the MsrPQ system that repairs oxidized periplasmic proteins containing methionine sulfoxide residues (Met-O), using respiratory chain electrons. Thus protects these proteins from oxidative-stress damage caused by reactive species of oxygen and chlorine generated by the host defense mechanisms. MsrPQ is essential for the maintenance of envelope integrity under bleach stress, rescuing a wide series of structurally unrelated periplasmic proteins from methionine oxidation. MsrQ provides electrons for reduction to the reductase catalytic subunit MsrP, using the quinone pool of the respiratory chain. In Pectobacterium carotovorum subsp. carotovorum (strain PC1), this protein is Protein-methionine-sulfoxide reductase heme-binding subunit MsrQ.